The chain runs to 355 residues: Alanine racemase (355 aa).

Lys-34 functions as the Proton acceptor; specific for D-alanine in the catalytic mechanism. Residue Lys-34 is modified to N6-(pyridoxal phosphate)lysine. Residue Arg-133 coordinates substrate. Tyr-249 (proton acceptor; specific for L-alanine) is an active-site residue. Met-297 is a substrate binding site.

This sequence belongs to the alanine racemase family. Pyridoxal 5'-phosphate serves as cofactor.

It carries out the reaction L-alanine = D-alanine. It functions in the pathway amino-acid biosynthesis; D-alanine biosynthesis; D-alanine from L-alanine: step 1/1. In terms of biological role, catalyzes the interconversion of L-alanine and D-alanine. May also act on other amino acids. The polypeptide is Alanine racemase (alr) (Rickettsia peacockii (strain Rustic)).